A 461-amino-acid polypeptide reads, in one-letter code: ATP synthase subunit beta 2 (461 aa).

151–158 is an ATP binding site; sequence GGAGVGKT.

This sequence belongs to the ATPase alpha/beta chains family. F-type ATPases have 2 components, CF(1) - the catalytic core - and CF(0) - the membrane proton channel. CF(1) has five subunits: alpha(3), beta(3), gamma(1), delta(1), epsilon(1). CF(0) has three main subunits: a(1), b(2) and c(9-12). The alpha and beta chains form an alternating ring which encloses part of the gamma chain. CF(1) is attached to CF(0) by a central stalk formed by the gamma and epsilon chains, while a peripheral stalk is formed by the delta and b chains.

Its subcellular location is the cell inner membrane. It catalyses the reaction ATP + H2O + 4 H(+)(in) = ADP + phosphate + 5 H(+)(out). Functionally, produces ATP from ADP in the presence of a proton gradient across the membrane. The catalytic sites are hosted primarily by the beta subunits. The sequence is that of ATP synthase subunit beta 2 from Pseudoalteromonas atlantica (strain T6c / ATCC BAA-1087).